Reading from the N-terminus, the 404-residue chain is Serine palmitoyltransferase (404 aa).

Residues 112 to 113 (GY), S185, H213, and T241 contribute to the pyridoxal 5'-phosphate site. Residue K244 is modified to N6-(pyridoxal phosphate)lysine.

The protein belongs to the class-II pyridoxal-phosphate-dependent aminotransferase family. Requires pyridoxal 5'-phosphate as cofactor.

The protein localises to the cytoplasm. The enzyme catalyses L-serine + hexadecanoyl-CoA + H(+) = 3-oxosphinganine + CO2 + CoA. It participates in lipid metabolism; sphingolipid metabolism. Involved in de novo bacterial ceramide synthesis. Catalyzes the condensation of L-serine with palmitoyl-CoA (hexadecanoyl-CoA) to produce 3-oxosphinganine. Can also condense serine and C16:1-CoA, but shows a preference for palmitoyl-CoA. In Caulobacter vibrioides (strain NA1000 / CB15N) (Caulobacter crescentus), this protein is Serine palmitoyltransferase.